Reading from the N-terminus, the 566-residue chain is DNA ligase B (566 aa).

K125 serves as the catalytic N6-AMP-lysine intermediate.

Belongs to the NAD-dependent DNA ligase family. LigB subfamily.

The catalysed reaction is NAD(+) + (deoxyribonucleotide)n-3'-hydroxyl + 5'-phospho-(deoxyribonucleotide)m = (deoxyribonucleotide)n+m + AMP + beta-nicotinamide D-nucleotide.. Catalyzes the formation of phosphodiester linkages between 5'-phosphoryl and 3'-hydroxyl groups in double-stranded DNA using NAD as a coenzyme and as the energy source for the reaction. This Pseudomonas putida (strain ATCC 700007 / DSM 6899 / JCM 31910 / BCRC 17059 / LMG 24140 / F1) protein is DNA ligase B.